Reading from the N-terminus, the 665-residue chain is Methionine--tRNA ligase (665 aa).

The 'HIGH' region signature appears at 12-22 (YYPSGKLHIGS). Residues 308-312 (KMSKS) carry the 'KMSKS' region motif. Lys-311 provides a ligand contact to ATP. A tRNA-binding domain is found at 562 to 665 (TFDAVEIRVA…PSVPNGSIIG (104 aa)).

It belongs to the class-I aminoacyl-tRNA synthetase family. MetG type 2B subfamily. In terms of assembly, homodimer.

The protein resides in the cytoplasm. The catalysed reaction is tRNA(Met) + L-methionine + ATP = L-methionyl-tRNA(Met) + AMP + diphosphate. Functionally, is required not only for elongation of protein synthesis but also for the initiation of all mRNA translation through initiator tRNA(fMet) aminoacylation. This is Methionine--tRNA ligase (metG) from Streptococcus pyogenes serotype M6 (strain ATCC BAA-946 / MGAS10394).